Here is a 176-residue protein sequence, read N- to C-terminus: Ribosome maturation factor RimM (176 aa).

The region spanning 97–176 (EDEFYWRDLI…QILVDWDPDF (80 aa)) is the PRC barrel domain.

It belongs to the RimM family. Binds ribosomal protein uS19.

It localises to the cytoplasm. In terms of biological role, an accessory protein needed during the final step in the assembly of 30S ribosomal subunit, possibly for assembly of the head region. Essential for efficient processing of 16S rRNA. May be needed both before and after RbfA during the maturation of 16S rRNA. It has affinity for free ribosomal 30S subunits but not for 70S ribosomes. The sequence is that of Ribosome maturation factor RimM from Shewanella sp. (strain ANA-3).